The primary structure comprises 492 residues: Cobyric acid synthase (492 aa).

The 189-residue stretch at 253–441 (VLKVIAPVYP…LHGLFDTPQA (189 aa)) folds into the GATase cobBQ-type domain. C334 functions as the Nucleophile in the catalytic mechanism. The active site involves H433.

This sequence belongs to the CobB/CobQ family. CobQ subfamily.

The protein operates within cofactor biosynthesis; adenosylcobalamin biosynthesis. Catalyzes amidations at positions B, D, E, and G on adenosylcobyrinic A,C-diamide. NH(2) groups are provided by glutamine, and one molecule of ATP is hydrogenolyzed for each amidation. The polypeptide is Cobyric acid synthase (Azoarcus sp. (strain BH72)).